The primary structure comprises 344 residues: Nuclear distribution protein nudE-like 1-B (344 aa).

A coiled-coil region spans residues Tyr-26–Asp-189.

This sequence belongs to the nudE family. In terms of processing, phosphorylated in mitosis.

It is found in the cytoplasm. The protein localises to the cytoskeleton. Its subcellular location is the microtubule organizing center. The protein resides in the centrosome. It localises to the spindle. Functionally, required for organization of the cellular microtubule array and microtubule anchoring at the centrosome. Positively regulates the activity of the minus-end directed microtubule motor protein dynein. May enhance dynein-mediated microtubule sliding by targeting dynein to the microtubule plus end. This is Nuclear distribution protein nudE-like 1-B (ndel1b) from Danio rerio (Zebrafish).